We begin with the raw amino-acid sequence, 591 residues long: Aspartate--tRNA(Asp/Asn) ligase (591 aa).

An L-aspartate-binding site is contributed by Glu-176. The aspartate stretch occupies residues 200–203; sequence QLFK. Arg-222 lines the L-aspartate pocket. Residues 222-224 and Gln-231 contribute to the ATP site; that span reads RDE. His-450 contributes to the L-aspartate binding site. Glu-484 is an ATP binding site. L-aspartate is bound at residue Arg-491. An ATP-binding site is contributed by 536–539; the sequence is GLDR.

It belongs to the class-II aminoacyl-tRNA synthetase family. Type 1 subfamily. As to quaternary structure, homodimer.

It is found in the cytoplasm. It catalyses the reaction tRNA(Asx) + L-aspartate + ATP = L-aspartyl-tRNA(Asx) + AMP + diphosphate. Functionally, aspartyl-tRNA synthetase with relaxed tRNA specificity since it is able to aspartylate not only its cognate tRNA(Asp) but also tRNA(Asn). Reaction proceeds in two steps: L-aspartate is first activated by ATP to form Asp-AMP and then transferred to the acceptor end of tRNA(Asp/Asn). The sequence is that of Aspartate--tRNA(Asp/Asn) ligase from Bacillus cereus (strain AH187).